The chain runs to 306 residues: Pantothenate kinase (306 aa).

91–98 serves as a coordination point for ATP; it reads GSVAVGKS.

This sequence belongs to the prokaryotic pantothenate kinase family.

The protein resides in the cytoplasm. The catalysed reaction is (R)-pantothenate + ATP = (R)-4'-phosphopantothenate + ADP + H(+). It participates in cofactor biosynthesis; coenzyme A biosynthesis; CoA from (R)-pantothenate: step 1/5. In Streptococcus pneumoniae (strain JJA), this protein is Pantothenate kinase.